Reading from the N-terminus, the 792-residue chain is Glucocorticoid receptor (792 aa).

The span at 1–15 (MDSKESLAPPGRDEV) shows a compositional bias: basic and acidic residues. Residues 1 to 25 (MDSKESLAPPGRDEVPSSLLGRGRG) are disordered. Residues 1–436 (MDSKESLAPP…STATGPPPKL (436 aa)) form a modulating region. Arg24 is modified (omega-N-methylarginine). Ser46 bears the Phosphoserine mark. The segment at 67 to 98 (SKGSASNAQQQQQQQQQQQQQQQQQPQPDLSK) is disordered. Over residues 75 to 94 (QQQQQQQQQQQQQQQQQPQP) the composition is skewed to low complexity. Phosphoserine occurs at positions 131, 152, and 159. A compositionally biased stretch (polar residues) spans 148-162 (NRSTSRPENPKSSTP). Residues 148 to 201 (NRSTSRPENPKSSTPAAGCATPTEKEFPQTHSDPSSEQQNRKSQPGTNGGSVKL) are disordered. Thr168 carries the phosphothreonine modification. A compositionally biased stretch (polar residues) spans 176–193 (QTHSDPSSEQQNRKSQPG). Residues Ser221, Ser229, Ser243, and Ser284 each carry the phosphoserine modification. Residues Lys294 and Lys310 each participate in a glycyl lysine isopeptide (Lys-Gly) (interchain with G-Cter in SUMO); alternate cross-link. Residues Lys294 and Lys310 each participate in a glycyl lysine isopeptide (Lys-Gly) (interchain with G-Cter in SUMO2); alternate cross-link. A phosphoserine mark is found at Ser324 and Ser421. Positions 434–509 (PKLCLVCSDE…AGMNLEARKT (76 aa)) form a DNA-binding region, nuclear receptor. A Glycyl lysine isopeptide (Lys-Gly) (interchain with G-Cter in ubiquitin) cross-link involves residue Lys435. 2 NR C4-type zinc fingers span residues 437 to 457 (CLVC…CGSC) and 473 to 497 (CAGR…YRKC). N6-acetyllysine occurs at positions 496, 508, 510, and 511. Residues 501–792 (GMNLEARKTK…NIKKLLFHQK (292 aa)) are interaction with CLOCK. Positions 503-538 (NLEARKTKKKIKGIQQATAGVSQDTSENANKTIVPA) are hinge. An NR LBD domain is found at 539–773 (ALPQLTPTLV…FPEMLAEIIT (235 aa)). Residues 547-712 (LVSLLEVIEP…EIRMTYIKEL (166 aa)) form an interaction with CRY1 region. Residue Lys718 forms a Glycyl lysine isopeptide (Lys-Gly) (interchain with G-Cter in SUMO) linkage.

This sequence belongs to the nuclear hormone receptor family. NR3 subfamily. Heteromultimeric cytoplasmic complex with HSP90AA1, HSPA1A/HSPA1B, and FKBP5 or another immunophilin such as PPID, STIP1, or the immunophilin homolog PPP5C. Upon ligand binding FKBP5 dissociates from the complex and FKBP4 takes its place, thereby linking the complex to dynein and mediating transport to the nucleus, where the complex dissociates. Probably forms a complex composed of chaperones HSP90 and HSP70, co-chaperones CDC37, PPP5C, TSC1 and client protein TSC2, CDK4, AKT, RAF1 and NR3C1; this complex does not contain co-chaperones STIP1/HOP and PTGES3/p23. Directly interacts with UNC45A. Binds to DNA as a homodimer, and as heterodimer with NR3C2 or the retinoid X receptor. Binds STAT5A and STAT5B homodimers and heterodimers. Interacts with NRIP1, POU2F1, POU2F2 and TRIM28. Interacts with several coactivator complexes, including the SMARCA4 complex, CREBBP/EP300, TADA2L (Ada complex) and p160 coactivators such as NCOA2 and NCOA6. Interaction with BAG1 inhibits transactivation. Interacts with HEXIM1 and TGFB1I1. Interacts with NCOA1. Interacts with NCOA3, SMARCA4, SMARCC1, SMARCD1, and SMARCE1. Interacts with CLOCK, CRY1 and CRY2 in a ligand-dependent fashion. Interacts with CIART. Interacts with RWDD3. Interacts with UBE2I/UBC9 and this interaction is enhanced in the presence of RWDD3. Interacts with GRIP1. Interacts with NR4A3 (via nuclear receptor DNA-binding domain), represses transcription activity of NR4A3 on the POMC promoter Nur response element (NurRE). Directly interacts with PNRC2 to attract and form a complex with UPF1 and DCP1A; the interaction leads to rapid mRNA degradation. Interacts with GSK3B. Interacts with FNIP1 and FNIP2. Interacts (via C-terminus) with HNRNPU (via C-terminus). Interacts with MCM3AP. Interacts (via domain NR LBD) with HSP90AA1 and HSP90AB1. In the absence of hormonal ligand, interacts with TACC1. Interacts (via NR LBD domain) with ZNF764 (via KRAB domain); the interaction regulates transcription factor activity of NR3C1 by directing its actions toward certain biologic pathways. Acetylation by CLOCK reduces its binding to glucocorticoid response elements and its transcriptional activity. Post-translationally, increased proteasome-mediated degradation in response to glucocorticoids. In terms of processing, phosphorylated in the absence of hormone; becomes hyperphosphorylated in the presence of glucocorticoids. Phosphorylated in the absence of hormone; becomes hyperphosphorylated in the presence of glucocorticoid. The Ser-221, Ser-243 and Ser-421-phosphorylated forms are mainly cytoplasmic, and the Ser-229-phosphorylated form is nuclear. Phosphorylation at Ser-229 increases transcriptional activity. Phosphorylation at Ser-221, Ser-243 and Ser-421 decreases signaling capacity. Phosphorylation at Ser-421 may protect from glucocorticoid-induced apoptosis. Phosphorylation at Ser-221 and Ser-229 is not required in regulation of chromosome segregation. May be dephosphorylated by PPP5C, attenuates NR3C1 action. Sumoylation at Lys-294 and Lys-310 negatively regulates its transcriptional activity. Sumoylation at Lys-718 positively regulates its transcriptional activity in the presence of RWDD3. Sumoylation at Lys-294 and Lys-310 is dispensable whereas sumoylation at Lys-718 is critical for the stimulatory effect of RWDD3 on its transcriptional activity. Heat shock increases sumoylation in a RWDD3-dependent manner. Post-translationally, ubiquitinated. Ubiquitination by UBR5 leads to its degradation: UBR5 specifically recognizes and binds ligand-bound NR3C1 when it is not associated with coactivators (NCOAs). In presence of NCOAs, the UBR5-degron is not accessible, preventing its ubiquitination and degradation. As to expression, expressed in spleen, kidney and liver. Expressed in a circadian manner in the liver. In terms of tissue distribution, expressed at highest level in spleen with lesser amounts in kidney and liver.

It is found in the cytoplasm. It localises to the nucleus. The protein localises to the mitochondrion. The protein resides in the cytoskeleton. Its subcellular location is the spindle. It is found in the microtubule organizing center. It localises to the centrosome. The protein localises to the chromosome. The protein resides in the nucleoplasm. Functionally, receptor for glucocorticoids (GC). Has a dual mode of action: as a transcription factor that binds to glucocorticoid response elements (GRE), both for nuclear and mitochondrial DNA, and as a modulator of other transcription factors. Affects inflammatory responses, cellular proliferation and differentiation in target tissues. Involved in chromatin remodeling. Plays a role in rapid mRNA degradation by binding to the 5' UTR of target mRNAs and interacting with PNRC2 in a ligand-dependent manner which recruits the RNA helicase UPF1 and the mRNA-decapping enzyme DCP1A, leading to RNA decay. Could act as a coactivator for STAT5-dependent transcription upon growth hormone (GH) stimulation and could reveal an essential role of hepatic GR in the control of body growth. Its function is as follows. Has transcriptional activation and repression activity. Mediates glucocorticoid-induced apoptosis. Promotes accurate chromosome segregation during mitosis. May act as a tumor suppressor. May play a negative role in adipogenesis through the regulation of lipolytic and antilipogenic gene expression. In terms of biological role, acts as a dominant negative inhibitor of isoform 1. Has intrinsic transcriptional activity independent of isoform Alpha when both isoforms are coexpressed. Loses this transcription modulator function on its own. Has no hormone-binding activity. May play a role in controlling glucose metabolism by maintaining insulin sensitivity. Reduces hepatic gluconeogenesis through down-regulation of PEPCK in an isoform Alpha-dependent manner. Directly regulates STAT1 expression in isoform Alpha-independent manner. The chain is Glucocorticoid receptor (Nr3c1) from Mus musculus (Mouse).